Here is a 203-residue protein sequence, read N- to C-terminus: Probable nicotinate-nucleotide adenylyltransferase (203 aa).

It belongs to the NadD family.

The enzyme catalyses nicotinate beta-D-ribonucleotide + ATP + H(+) = deamido-NAD(+) + diphosphate. The protein operates within cofactor biosynthesis; NAD(+) biosynthesis; deamido-NAD(+) from nicotinate D-ribonucleotide: step 1/1. Its function is as follows. Catalyzes the reversible adenylation of nicotinate mononucleotide (NaMN) to nicotinic acid adenine dinucleotide (NaAD). This is Probable nicotinate-nucleotide adenylyltransferase from Prosthecochloris aestuarii (strain DSM 271 / SK 413).